The sequence spans 180 residues: Putative peroxiredoxin YkuU (180 aa).

Positions 4–165 constitute a Thioredoxin domain; sequence RMVGKQAPRF…TLRVLQALQT (162 aa). Residue cysteine 52 is the Cysteine sulfenic acid (-SOH) intermediate of the active site.

It belongs to the peroxiredoxin family. AhpC/Prx1 subfamily. As to quaternary structure, homodimer; disulfide-linked, upon oxidation.

It localises to the cytoplasm. It carries out the reaction a hydroperoxide + [protein]-dithiol = [protein]-disulfide + an alcohol + H2O. Functionally, thiol-specific peroxidase that catalyzes the reduction of hydrogen peroxide and organic hydroperoxides to water and alcohols, respectively. Plays a role in cell protection against oxidative stress by detoxifying peroxides. The sequence is that of Putative peroxiredoxin YkuU (ykuU) from Bacillus subtilis (strain 168).